The following is a 63-amino-acid chain: Large ribosomal subunit protein uL29 (63 aa).

This sequence belongs to the universal ribosomal protein uL29 family.

In Pectobacterium carotovorum subsp. carotovorum (strain PC1), this protein is Large ribosomal subunit protein uL29.